The following is a 196-amino-acid chain: ATP-dependent Clp protease proteolytic subunit (196 aa).

Ser99 acts as the Nucleophile in catalysis. The active site involves His124.

The protein belongs to the peptidase S14 family. In terms of assembly, fourteen ClpP subunits assemble into 2 heptameric rings which stack back to back to give a disk-like structure with a central cavity, resembling the structure of eukaryotic proteasomes.

It is found in the cytoplasm. The enzyme catalyses Hydrolysis of proteins to small peptides in the presence of ATP and magnesium. alpha-casein is the usual test substrate. In the absence of ATP, only oligopeptides shorter than five residues are hydrolyzed (such as succinyl-Leu-Tyr-|-NHMec, and Leu-Tyr-Leu-|-Tyr-Trp, in which cleavage of the -Tyr-|-Leu- and -Tyr-|-Trp bonds also occurs).. Functionally, cleaves peptides in various proteins in a process that requires ATP hydrolysis. Has a chymotrypsin-like activity. Plays a major role in the degradation of misfolded proteins. This is ATP-dependent Clp protease proteolytic subunit from Helicobacter hepaticus (strain ATCC 51449 / 3B1).